The chain runs to 333 residues: Adenosine deaminase (333 aa).

Residues H12 and H14 each contribute to the Zn(2+) site. The substrate site is built by H14, D16, and G170. Position 197 (H197) interacts with Zn(2+). The active-site Proton donor is the E200. D278 lines the Zn(2+) pocket. Residue D279 coordinates substrate.

This sequence belongs to the metallo-dependent hydrolases superfamily. Adenosine and AMP deaminases family. Adenosine deaminase subfamily. It depends on Zn(2+) as a cofactor.

The enzyme catalyses adenosine + H2O + H(+) = inosine + NH4(+). The catalysed reaction is 2'-deoxyadenosine + H2O + H(+) = 2'-deoxyinosine + NH4(+). Catalyzes the hydrolytic deamination of adenosine and 2-deoxyadenosine. This chain is Adenosine deaminase, found in Proteus mirabilis (strain HI4320).